The following is a 365-amino-acid chain: MRRHWLLVGACGWVLLILMFVSKFINFSFRIPGDYAGRSEIFVWTLSSVTTKLPSVVWPEKGASQPYILSSVSPSVVEPIDWHLVNEKRLEQLSTVCSNSSIWNLTHTTVRKFVLDRIFVCDKHKILFCQTPKVGNTQWKKVLIVLNGKFSKVEAIPENLVHDHERNGLPRLSSMTDTEIHQRLNSYFKFFIVRDPFERLISAFKDKFVKNPRFEPWYKHDIAPAIVRKYRRSHHDDSESVGLRFEDFVRYLGDKTGRQHLDRQFGDHIIHWLTYAELCAPCDISYNVVGHHETLELDAPYILKSAGIAGLVSYPSIPPGITRYNRTKVERYFSGISQRDIRRLYARYQGDFSLFDYPKPAFLLN.

Residues 1–6 (MRRHWL) lie on the Cytoplasmic side of the membrane. The chain crosses the membrane as a helical; Signal-anchor for type II membrane protein span at residues 7-27 (LVGACGWVLLILMFVSKFINF). Residues 28-356 (SFRIPGDYAG…RYQGDFSLFD (329 aa)) are Lumenal-facing. Asn-99 and Asn-104 each carry an N-linked (GlcNAc...) asparagine glycan. Residues 132 to 138 (PKVGNTQ) and 194 to 202 (RDPFERLIS) contribute to the 3'-phosphoadenylyl sulfate site. An N-linked (GlcNAc...) asparagine glycan is attached at Asn-325.

It belongs to the sulfotransferase 2 family.

It is found in the golgi apparatus membrane. Its function is as follows. Catalyzes the transfer of sulfate to position 3 of terminal glucuronic acid of both protein- and lipid-linked oligosaccharides. Participates in biosynthesis of HNK-1 carbohydrate structure, a sulfated glucuronyl-lactosaminyl residue carried by many neural recognition molecules. In Danio rerio (Zebrafish), this protein is Carbohydrate sulfotransferase 10 (chst10).